A 622-amino-acid chain; its full sequence is Low affinity potassium transport system protein Kup (622 aa).

A run of 12 helical transmembrane segments spans residues 9-29 (LPAV…TSPL), 49-69 (VFGF…LKYL), 101-121 (VLVI…VITP), 137-157 (PSMD…LFII), 165-185 (VGKL…VLGA), 212-232 (AVSF…EALY), 247-267 (WFTV…ALLL), 279-299 (LLAP…ATII), 337-357 (IYIP…IVSF), 363-383 (LAAA…ILFC), 397-417 (AWVL…ANVV), and 419-439 (ILSG…IMTT).

Belongs to the HAK/KUP transporter (TC 2.A.72) family.

It is found in the cell inner membrane. The enzyme catalyses K(+)(in) + H(+)(in) = K(+)(out) + H(+)(out). Its function is as follows. Responsible for the low-affinity transport of potassium into the cell. Likely operates as a K(+):H(+) symporter. The protein is Low affinity potassium transport system protein Kup of Pectobacterium carotovorum subsp. carotovorum (strain PC1).